The following is a 400-amino-acid chain: NADH-ubiquinone oxidoreductase 49 kDa subunit (400 aa).

It belongs to the complex I 49 kDa subunit family.

Its subcellular location is the mitochondrion. It carries out the reaction a ubiquinone + NADH + 5 H(+)(in) = a ubiquinol + NAD(+) + 4 H(+)(out). Functionally, core subunit of the mitochondrial membrane respiratory chain NADH dehydrogenase (Complex I) that is believed to belong to the minimal assembly required for catalysis. Complex I functions in the transfer of electrons from NADH to the respiratory chain. The immediate electron acceptor for the enzyme is believed to be ubiquinone. Component of the iron-sulfur (IP) fragment of the enzyme. Component of the iron-sulfur (IP) fragment of the enzyme. The sequence is that of NADH-ubiquinone oxidoreductase 49 kDa subunit (NAD7) from Paramecium tetraurelia.